The following is a 362-amino-acid chain: Beta-ketoacyl-[acyl-carrier-protein] synthase III 2 (362 aa).

Residues Cys-113 and His-251 contribute to the active site. An ACP-binding region spans residues 252–256 (QANIR). Residue Asn-281 is part of the active site.

Belongs to the thiolase-like superfamily. FabH family. As to quaternary structure, homodimer.

The protein resides in the cytoplasm. It catalyses the reaction malonyl-[ACP] + acetyl-CoA + H(+) = 3-oxobutanoyl-[ACP] + CO2 + CoA. It participates in lipid metabolism; fatty acid biosynthesis. Catalyzes the condensation reaction of fatty acid synthesis by the addition to an acyl acceptor of two carbons from malonyl-ACP. Catalyzes the first condensation reaction which initiates fatty acid synthesis and may therefore play a role in governing the total rate of fatty acid production. Possesses both acetoacetyl-ACP synthase and acetyl transacylase activities. Its substrate specificity determines the biosynthesis of branched-chain and/or straight-chain of fatty acids. This is Beta-ketoacyl-[acyl-carrier-protein] synthase III 2 from Vibrio cholerae serotype O1 (strain ATCC 39315 / El Tor Inaba N16961).